The sequence spans 364 residues: PHD finger protein 6 (364 aa).

Residue serine 2 is modified to N-acetylserine. 2 consecutive short sequence motifs (nuclear localization signal) follow at residues 13–16 (RQRK) and 129–133 (RKHKK). The C2HC pre-PHD-type 1 zinc finger occupies 14–52 (QRKCGFCKSNRDKECGQLLISENQKVAAHHKCMLFSSAL). The segment at 14-132 (QRKCGFCKSN…IYMVYCRKHK (119 aa)) is extended PHD1 domain (ePHD1). A PHD-type 1 zinc finger spans residues 80 to 132 (LMCSLCHCPGATIGCDVKTCHRTYHYHCALHDKAQIREKPSQGIYMVYCRKHK). A phosphoserine mark is found at serine 138, serine 145, and serine 155. The tract at residues 139-211 (EADLEESFNE…RSSPNDTRPK (73 aa)) is disordered. The Nucleolar localization signal signature appears at 157 to 169 (KTKKKSRKGRPRK). Residues 157-171 (KTKKKSRKGRPRKTN) show a composition bias toward basic residues. Residue lysine 173 forms a Glycyl lysine isopeptide (Lys-Gly) (interchain with G-Cter in SUMO2) linkage. A phosphoserine mark is found at serine 183 and serine 199. The C2HC pre-PHD-type 2 zinc finger occupies 209 to 249 (RPKCGFCHVGEEENEARGKLHIFNAKKAAAHYKCMLFSSGT). The segment at 209–330 (RPKCGFCHVG…IYKLYCKNHS (122 aa)) is extended PHD2 domain (ePHD2). Residue lysine 227 forms a Glycyl lysine isopeptide (Lys-Gly) (interchain with G-Cter in SUMO2) linkage. Residues 278-330 (MKCTLCSQPGATIGCEIKACVKTYHYHCGVQDKAKYIENMSRGIYKLYCKNHS) form a PHD-type 2 zinc finger. The interval 330–364 (SGNDERDEEDEERESKSRGRVAIDQQLTQQQLNGN) is disordered. Residues 354–364 (QQLTQQQLNGN) show a composition bias toward polar residues. At threonine 357 the chain carries Phosphothreonine.

In terms of assembly, interacts with UBTF. Interacts with the NuRD complex component RBBP4 (via the nucleolar localization motif), the interaction mediates transcriptional repression activity. At 12.5 dpc it is highly expressed in the embryonic central nervous system and at lower levels in other tissues. Very low levels present throughout the adult brain.

The protein resides in the nucleus. Its subcellular location is the nucleolus. It localises to the chromosome. It is found in the centromere. The protein localises to the kinetochore. Functionally, transcriptional regulator that associates with ribosomal RNA promoters and suppresses ribosomal RNA (rRNA) transcription. In Mus musculus (Mouse), this protein is PHD finger protein 6 (Phf6).